Reading from the N-terminus, the 786-residue chain is Pheromone-regulated membrane protein 10 (786 aa).

Basic and acidic residues predominate over residues 1-28 (MADSGDKDVSKSVRFDKESIESKKRSSV). Disordered regions lie at residues 1–65 (MADS…EDGN) and 77–103 (NGGAGLAPGLSKANSNQEKTDLEDNDN). Low complexity predominate over residues 29–42 (DDSASSYSSSSSGQ). The next 10 membrane-spanning stretches (helical) occupy residues 469-489 (WVCVFLYGFCSAMVTPYAFGG), 491-511 (WINLAITFFMGSCVGMMQFIL), 521-541 (VFEITASIVVSFCGRAFGSIP), 545-565 (ICFGAITQGSLALILPGYIIL), 584-604 (FYAIIYSLFLGFGITLGAALF), 620-640 (PISPWFRFLFVPAFTIGISLI), 645-665 (WTQLPAMVFISCTGYVVTYWS), 675-695 (FTAALASFVIGILGNLYSRIW), 697-717 (GLAVSAMLPAIFVQVPSGIAS), and 751-771 (FGITMIEVSIGISVGLFASTL).

This sequence belongs to the ThrE exporter (TC 2.A.79) family.

Its subcellular location is the membrane. This is Pheromone-regulated membrane protein 10 from Candida glabrata (strain ATCC 2001 / BCRC 20586 / JCM 3761 / NBRC 0622 / NRRL Y-65 / CBS 138) (Yeast).